Consider the following 957-residue polypeptide: Glycine dehydrogenase (decarboxylating) (957 aa).

An N6-(pyridoxal phosphate)lysine modification is found at Lys-702.

It belongs to the GcvP family. As to quaternary structure, the glycine cleavage system is composed of four proteins: P, T, L and H. Pyridoxal 5'-phosphate is required as a cofactor.

The catalysed reaction is N(6)-[(R)-lipoyl]-L-lysyl-[glycine-cleavage complex H protein] + glycine + H(+) = N(6)-[(R)-S(8)-aminomethyldihydrolipoyl]-L-lysyl-[glycine-cleavage complex H protein] + CO2. In terms of biological role, the glycine cleavage system catalyzes the degradation of glycine. The P protein binds the alpha-amino group of glycine through its pyridoxal phosphate cofactor; CO(2) is released and the remaining methylamine moiety is then transferred to the lipoamide cofactor of the H protein. The polypeptide is Glycine dehydrogenase (decarboxylating) (Synechococcus sp. (strain RCC307)).